Here is a 972-residue protein sequence, read N- to C-terminus: Cycloisomaltooligosaccharide glucanotransferase (972 aa).

The N-terminal stretch at 1–38 (MVRFMYALRKRRLSLLLAMSLLVMCVASVVSPPPQALA) is a signal peptide. CBM6 domains are found at residues 421 to 546 (TRYE…LTLG) and 748 to 871 (DIYE…LDLD).

The protein belongs to the glycosyl hydrolase 66 family. As to quaternary structure, monomer.

It catalyses the reaction cyclizes part of a (1-&gt;6)-alpha-D-glucan chain by formation of a (1-&gt;6)-alpha-D-glucosidic bond.. Its function is as follows. Produces cycloisomaltooligosaccharide from dextran containing 7, 8 or 9 glucose units. The enzyme is specific for (1-&gt;6)-alpha-D-glucans (dextrans) and, without activity toward (1-&gt;4)-alpha-D-glucans, such as amylose. It also has no activity on oligosaccharides, such as amylopectin and pullulan, containing (1-&gt;6)-alpha-D-glucosidic linkages at branch points. The sequence is that of Cycloisomaltooligosaccharide glucanotransferase from Niallia circulans (Bacillus circulans).